We begin with the raw amino-acid sequence, 988 residues long: MPRRSILSAAERESLLALPDSKDDLIRHYTFNDTDLSIIRQRRGPANRLGFAVQLCYLRFPGVILGVDELPFPPLLKPVADQPKVGVESWNEYGQREQTRREHLSELQTVFGFRPFTMSHYRQAVQMLTELAMQTDKGIVLASALIGHLRRQSVILPALNAVERASAEAITRANRRIYDALAEPLADAHRRRLDDLLKRRDNGKTTWLAWLRQSPAKPNSRHMLEHIERLKAWQALDLPTGIERLVHQNRLLKIAREGGQMTPADLAKFEPQRRYATLVALATEGMATVTDEIIDLHDRILGKLFNAAKNKHQQQFQASGKAINAKVRLYGRIGQALIDAKQSGRDAFAAIEAVMSWDSFAESVTEAQKLAQPGGFGFLHRIGESYATLRRYAPEFLAVLKLRAAPAAKNVLDAIEVLRGMNTDNARKLPADAPTGFIKPRWQKLVMTDAGIDRAYYELCALSELKNSLRSGDIWVQGSRQFKDFEDYLVPPEKFTSLKQSSELPLAVATGCEQYLHERLTLLEAQLATVNRMAAANDLPDAIITESGLKITPLDAAVPDTAQALIDQTAMVLPHVKITELLLEVDEWTGFTRHFTHLKSGDLAKDKNLLLTTILADAINLGLTKMAESCPGTTYAKLAWLQAWHTRDETYSTALAELVNAQFRHPFAGHWGDGTTSSSDEQNFRTASKAKSTGHINPKYGSSPGRTFYTHISDQYAPFHTKVVNVGLRDSTYVLDDLLYHESDLRIEEHYTDTAGFTDHVFALMHLLGFRFAPRIRDLGDTKLYIPKGDAAYDALKPMIGGTLNIKHVRAHWDEILRLATSIKQGTVTASLMLRKLGSYPRQNGLAVALRELGRVERTLFILDWLQGVELRRRVHAGLNKGEARNALARAVFFNRLGEIRDRSFEQQRYRASGLNLVTAAIVLWNTVYLERAAHALRGNGHAVDDSLLQYLSPLGWEHINLTGDYLWRSSAKIGAGKFRPLRPLQPA.

The tract at residues Gly-672–Ile-696 is disordered. The span at Gly-674–His-695 shows a compositional bias: polar residues.

This sequence belongs to the transposase 7 family.

Required for transposition of transposon Tn21. This is Transposase for transposon Tn21 (tnpA) from Escherichia coli.